Consider the following 290-residue polypeptide: Acetyl-coenzyme A carboxylase carboxyl transferase subunit beta (290 aa).

Residues 28-290 (IMTKCPKCKK…TGGDIEWLQD (263 aa)) form the CoA carboxyltransferase N-terminal domain. Zn(2+) contacts are provided by Cys32, Cys35, Cys51, and Cys54. The C4-type zinc-finger motif lies at 32 to 54 (CPKCKKIMLTKELDKNMRVCMNC).

It belongs to the AccD/PCCB family. As to quaternary structure, acetyl-CoA carboxylase is a heterohexamer composed of biotin carboxyl carrier protein (AccB), biotin carboxylase (AccC) and two subunits each of ACCase subunit alpha (AccA) and ACCase subunit beta (AccD). Requires Zn(2+) as cofactor.

Its subcellular location is the cytoplasm. It carries out the reaction N(6)-carboxybiotinyl-L-lysyl-[protein] + acetyl-CoA = N(6)-biotinyl-L-lysyl-[protein] + malonyl-CoA. It participates in lipid metabolism; malonyl-CoA biosynthesis; malonyl-CoA from acetyl-CoA: step 1/1. Its activity is regulated as follows. Inhibited by pyrrolidine dione antibiotics moiramide B (CPD1) and CPD2. In terms of biological role, component of the acetyl coenzyme A carboxylase (ACC) complex. Biotin carboxylase (BC) catalyzes the carboxylation of biotin on its carrier protein (BCCP) and then the CO(2) group is transferred by the transcarboxylase to acetyl-CoA to form malonyl-CoA. The chain is Acetyl-coenzyme A carboxylase carboxyl transferase subunit beta from Bacillus subtilis (strain 168).